The following is a 234-amino-acid chain: Carboxymethylenebutenolidase 1 (234 aa).

Residues Cys123, Asp171, and His201 contribute to the active site.

Belongs to the dienelactone hydrolase family. In terms of assembly, monomer.

The enzyme catalyses 2-(5-oxo-2,5-dihydrofuran-2-ylidene)acetate + H2O = 4-oxohex-2-enedioate + H(+). It participates in aromatic compound metabolism; 3-chlorocatechol degradation. In terms of biological role, ring cleavage of cyclic ester dienelactone to produce maleylacetate. The polypeptide is Carboxymethylenebutenolidase 1 (tfdEI) (Cupriavidus pinatubonensis (strain JMP 134 / LMG 1197) (Cupriavidus necator (strain JMP 134))).